Reading from the N-terminus, the 387-residue chain is Protein RecA (387 aa).

80–87 (GPESSGKT) provides a ligand contact to ATP. The segment at 348–387 (LDDSEVAETEEETTASKTKAKAKKEEKAVETEEIELELED) is disordered. Composition is skewed to acidic residues over residues 349–360 (DDSEVAETEEET) and 378–387 (TEEIELELED).

It belongs to the RecA family.

The protein localises to the cytoplasm. Functionally, can catalyze the hydrolysis of ATP in the presence of single-stranded DNA, the ATP-dependent uptake of single-stranded DNA by duplex DNA, and the ATP-dependent hybridization of homologous single-stranded DNAs. It interacts with LexA causing its activation and leading to its autocatalytic cleavage. This is Protein RecA from Lactococcus lactis subsp. cremoris (strain MG1363).